Reading from the N-terminus, the 161-residue chain is RuBisCO chaperone RbcX (161 aa).

Disordered stretches follow at residues 1–20 (MQFMGTASRMASTQRAKPME) and 130–161 (LGAEPSLPETEVSDRPSDSATPDDASNASHAD). Residues 147–161 (DSATPDDASNASHAD) are compositionally biased toward polar residues.

The protein belongs to the RbcX family. In terms of assembly, homodimer. Interacts with the exposed C-terminal peptide of endogenous RbcL ('Lys-460-Asp-470') via its central cleft, as well as C-terminal peptides from other cyanobacterial RbcL. Contacts a second RbcL monomer via its peripheral polar surface.

Its subcellular location is the carboxysome. It is found in the cytoplasm. Functionally, an RbcL-specific chaperone. The central cleft of the RbcX homodimer (RbcX2) binds the C-terminus of an RbcL monomer, stabilizing the C-terminus and probably preventing its reassociation with chaperonin GroEL-ES. At the same time the peripheral region of RbcX2 binds a second RbcL monomer, bridging the RbcL homodimers in the correct orientation. The RbcX2(2)-bound RbcL dimers then assemble into the RbcL8 core (RbcL8-(RbcX2)8). RbcS binding triggers the release of RbcX2. The chain is RuBisCO chaperone RbcX from Synechococcus sp. (strain ATCC 27144 / PCC 6301 / SAUG 1402/1) (Anacystis nidulans).